Here is a 154-residue protein sequence, read N- to C-terminus: SsrA-binding protein (154 aa).

Belongs to the SmpB family.

Its subcellular location is the cytoplasm. Required for rescue of stalled ribosomes mediated by trans-translation. Binds to transfer-messenger RNA (tmRNA), required for stable association of tmRNA with ribosomes. tmRNA and SmpB together mimic tRNA shape, replacing the anticodon stem-loop with SmpB. tmRNA is encoded by the ssrA gene; the 2 termini fold to resemble tRNA(Ala) and it encodes a 'tag peptide', a short internal open reading frame. During trans-translation Ala-aminoacylated tmRNA acts like a tRNA, entering the A-site of stalled ribosomes, displacing the stalled mRNA. The ribosome then switches to translate the ORF on the tmRNA; the nascent peptide is terminated with the 'tag peptide' encoded by the tmRNA and targeted for degradation. The ribosome is freed to recommence translation, which seems to be the essential function of trans-translation. In Enterococcus faecalis (strain ATCC 700802 / V583), this protein is SsrA-binding protein.